A 313-amino-acid polypeptide reads, in one-letter code: 2-phosphoglycerate kinase (313 aa).

Residues 8 to 95 form the ATP-cone domain; it reads SRILVTDKEY…LWRRVLKKHS (88 aa).

This sequence belongs to the 2-phosphoglycerate kinase family. It depends on a divalent metal cation as a cofactor.

The enzyme catalyses (2R)-2-phosphoglycerate + ATP = (2R)-2,3-bisphosphoglycerate + ADP + H(+). It participates in thermoadapter biosynthesis; cyclic 2,3-diphosphoglycerate biosynthesis; cyclic 2,3-diphosphoglycerate from 2-phospho-D-glycerate: step 1/2. In terms of biological role, catalyzes the phosphorylation of 2-phosphoglycerate to 2,3-diphosphoglycerate. Involved in the biosynthesis of cyclic 2,3-bisphosphoglycerate, a thermoprotectant. The protein is 2-phosphoglycerate kinase of Methanococcus maripaludis (strain C6 / ATCC BAA-1332).